A 226-amino-acid chain; its full sequence is Ribonuclease 3 (226 aa).

The 123-residue stretch at 7 to 129 (LPRLCRTLGY…IIGAVYLDAD (123 aa)) folds into the RNase III domain. E42 is a Mg(2+) binding site. The active site involves D46. Mg(2+) is bound by residues D115 and E118. E118 is an active-site residue. The DRBM domain maps to 156–226 (DPKTILQEYL…AAQVLELLNK (71 aa)).

This sequence belongs to the ribonuclease III family. As to quaternary structure, homodimer. Mg(2+) serves as cofactor.

The protein localises to the cytoplasm. The enzyme catalyses Endonucleolytic cleavage to 5'-phosphomonoester.. In terms of biological role, digests double-stranded RNA. Involved in the processing of primary rRNA transcript to yield the immediate precursors to the large and small rRNAs (23S and 16S). Processes some mRNAs, and tRNAs when they are encoded in the rRNA operon. Processes pre-crRNA and tracrRNA of type II CRISPR loci if present in the organism. The protein is Ribonuclease 3 of Shewanella frigidimarina (strain NCIMB 400).